The following is a 480-amino-acid chain: 2-phosphoxylose phosphatase 1 (480 aa).

Residues 1–6 (MLHRNR) are Cytoplasmic-facing. The chain crosses the membrane as a helical; Signal-anchor for type II membrane protein span at residues 7-27 (FLVLLALAGLLAFLSLSLQFF). The Lumenal segment spans residues 28-480 (HLIPVSATKN…YYDACHGEGA (453 aa)). Residue His-97 is the Nucleophile of the active site. N-linked (GlcNAc...) asparagine glycosylation is found at Asn-194, Asn-305, and Asn-354. Asp-379 acts as the Proton donor in catalysis.

It belongs to the histidine acid phosphatase family. In terms of assembly, interacts with B3GAT3; the interaction increases the 2-phosphoxylose phosphatase activity of PXYLP1 during completion of linkage region formation in a B3GAT3-mediated manner.

The protein localises to the golgi apparatus membrane. The catalysed reaction is 3-O-[beta-D-GlcA-(1-&gt;3)-beta-D-Gal-(1-&gt;3)-beta-D-Gal-(1-&gt;4)-beta-D-2-O-P-Xyl]-L-seryl-[protein] + H2O = 3-O-(beta-D-GlcA-(1-&gt;3)-beta-D-Gal-(1-&gt;3)-beta-D-Gal-(1-&gt;4)-beta-D-Xyl)-L-seryl-[protein] + phosphate. Responsible for the 2-O-dephosphorylation of xylose in the glycosaminoglycan-protein linkage region of proteoglycans thereby regulating the amount of mature glycosaminoglycan (GAG) chains. Sulfated glycosaminoglycans (GAGs), including heparan sulfate and chondroitin sulfate, are synthesized on the so-called common GAG-protein linkage region (GlcUAbeta1-3Galbeta1-3Galbeta1-4Xylbeta1-O-Ser) of core proteins, which is formed by the stepwise addition of monosaccharide residues by the respective specific glycosyltransferases. Xylose 2-O-dephosphorylation during completion of linkage region formation is a prerequisite for the initiation and efficient elongation of the repeating disaccharide region of GAG chains. The polypeptide is 2-phosphoxylose phosphatase 1 (Mus musculus (Mouse)).